The following is a 176-amino-acid chain: MPLNLEDKKAIVSEVAAVAASAHSAVAAEYRGLTVTEMTELRAKARQSNVYLRVVKNSLARRAVEGTDFACMQEGLVGPLVLAFSQDDPGAAARLVKDFAKEHKKLEVKLVSVGGQLLGPGELERLASMPTRDQAISLLMAVMKAPLDKFARTLNEVPGKLVRTVAAIRDQKQASA.

The protein belongs to the universal ribosomal protein uL10 family. In terms of assembly, part of the ribosomal stalk of the 50S ribosomal subunit. The N-terminus interacts with L11 and the large rRNA to form the base of the stalk. The C-terminus forms an elongated spine to which L12 dimers bind in a sequential fashion forming a multimeric L10(L12)X complex.

Forms part of the ribosomal stalk, playing a central role in the interaction of the ribosome with GTP-bound translation factors. The sequence is that of Large ribosomal subunit protein uL10 from Thioalkalivibrio sulfidiphilus (strain HL-EbGR7).